A 335-amino-acid chain; its full sequence is 2-acylglycerol O-acyltransferase 1 (335 aa).

Transmembrane regions (helical) follow at residues 18-38 and 40-60; these read TVAV…SIGI and VMLI…WLYF. Asn121 and Asn125 each carry an N-linked (GlcNAc...) asparagine glycan. Residues 132 to 152 form a helical membrane-spanning segment; it reads LFPGFTSYLHVLPLWFWCPVF. N-linked (GlcNAc...) asparagine glycosylation occurs at Asn180.

Belongs to the diacylglycerol acyltransferase family. Expressed in stomach and liver.

It is found in the endoplasmic reticulum membrane. The enzyme catalyses a 2-acylglycerol + an acyl-CoA = a 1,2-diacylglycerol + CoA. It carries out the reaction 2-(9Z-octadecenoyl)-glycerol + butanoyl-CoA = 1-butanoyl-2-(9Z-octadecenoyl)-glycerol + CoA. The catalysed reaction is 2-(9Z-octadecenoyl)-glycerol + octanoyl-CoA = 1-octanoyl-2-(9Z-octadecenoyl)-glycerol + CoA. It catalyses the reaction 2-(9Z-octadecenoyl)-glycerol + dodecanoyl-CoA = 1-dodecanoyl-2-(9Z-octadecenoyl)-glycerol + CoA. The enzyme catalyses 2-(9Z-octadecenoyl)-glycerol + tetradecanoyl-CoA = 1-tetradecanoyl-2-(9Z-octadecenoyl)-glycerol + CoA. It carries out the reaction 2-(9Z-octadecenoyl)-glycerol + hexadecanoyl-CoA = 1-hexadecanoyl-2-(9Z-octadecenoyl)-glycerol + CoA. The catalysed reaction is 2-(9Z-octadecenoyl)-glycerol + octadecanoyl-CoA = 1-octadecanoyl-2-(9Z-octadecenoyl)-glycerol + CoA. It catalyses the reaction eicosanoyl-CoA + 2-(9Z-octadecenoyl)-glycerol = 1-eicosanoyl-2-(9Z-octadecenoyl)-glycerol + CoA. The enzyme catalyses 2-(9Z-octadecenoyl)-glycerol + (9Z)-octadecenoyl-CoA = 1,2-di-(9Z-octadecenoyl)-glycerol + CoA. It carries out the reaction 2-(9Z-octadecenoyl)-glycerol + (9Z,12Z)-octadecadienoyl-CoA = 1-(9Z,12Z-octadecadienoyl)-2-(9Z-octadecenoyl)-glycerol + CoA. The catalysed reaction is 2-(9Z-octadecenoyl)-glycerol + (5Z,8Z,11Z,14Z)-eicosatetraenoyl-CoA = 1-(5Z,8Z,11Z,14Z-eicosatetraenoyl)-2-(9Z-octadecenoyl)-glycerol + CoA. It catalyses the reaction a 2-acylglycerol + an acyl-CoA = a 1,2-diacyl-sn-glycerol + CoA. The enzyme catalyses a 2-acylglycerol + an acyl-CoA = a 2,3-diacyl-sn-glycerol + CoA. It carries out the reaction a 1-acylglycerol + an acyl-CoA = a 1,2-diacylglycerol + CoA. The catalysed reaction is 1-dodecanoylglycerol + (9Z)-octadecenoyl-CoA = 1-dodecanoyl-2-(9Z-octadecenoyl)-glycerol + CoA. It catalyses the reaction 1-tetradecanoylglycerol + (9Z)-octadecenoyl-CoA = 1-tetradecanoyl-2-(9Z-octadecenoyl)-glycerol + CoA. The enzyme catalyses 1-hexadecanoylglycerol + (9Z)-octadecenoyl-CoA = 1-hexadecanoyl-2-(9Z-octadecenoyl)-glycerol + CoA. It carries out the reaction 1-(9Z-octadecenoyl)-glycerol + (9Z)-octadecenoyl-CoA = 1,2-di-(9Z-octadecenoyl)-glycerol + CoA. The catalysed reaction is 1-(9Z,12Z-octadecadienoyl)-glycerol + (9Z)-octadecenoyl-CoA = 1-(9Z,12Z-octadecadienoyl)-2-(9Z-octadecenoyl)-glycerol + CoA. It catalyses the reaction 1-(9Z,12Z,15Z-octadecatrienoyl)-glycerol + (9Z)-octadecenoyl-CoA = 1-(9Z,12Z,15Z-octadecatrienoyl)-2-(9Z-octadecenoyl)-glycerol + CoA. The enzyme catalyses 1-(5Z,8Z,11Z,14Z-eicosatetraenoyl)-glycerol + (9Z)-octadecenoyl-CoA = 1-(5Z,8Z,11Z,14Z-eicosatetraenoyl)-2-(9Z-octadecenoyl)-glycerol + CoA. It carries out the reaction a 1-acylglycerol + an acyl-CoA = a 1,3-diacylglycerol + CoA. The catalysed reaction is 1-dodecanoylglycerol + (9Z)-octadecenoyl-CoA = 1-dodecanoyl-3-(9Z-octadecenoyl)-glycerol + CoA. It catalyses the reaction 1-hexadecanoylglycerol + (9Z)-octadecenoyl-CoA = 1-(9Z-octadecenoyl)-3-hexadecanoylglycerol + CoA. The enzyme catalyses 1-octadecanoylglycerol + (9Z)-octadecenoyl-CoA = 1-octadecanoyl-3-(9Z-octadecenoyl)-glycerol + CoA. It carries out the reaction 1-(9Z-octadecenoyl)-sn-glycerol + (9Z)-octadecenoyl-CoA = 1,3-di-(9Z-octadecenoyl)-glycerol + CoA. The catalysed reaction is 1-(9Z,12Z-octadecadienoyl)-glycerol + (9Z)-octadecenoyl-CoA = 1-(9Z-octadecenoyl)-3-(9Z,12Z-octadecadienoyl)-glycerol + CoA. It catalyses the reaction 1-(9Z,12Z,15Z-octadecatrienoyl)-glycerol + (9Z)-octadecenoyl-CoA = 1-(9Z,12Z,15Z-octadecatrienoyl)-3-(9Z-octadecenoyl)-glycerol + CoA. The enzyme catalyses a 1-acyl-sn-glycerol + an acyl-CoA = a 1,3-diacyl-sn-glycerol + CoA. It carries out the reaction a 3-acyl-sn-glycerol + an acyl-CoA = a 1,3-diacyl-sn-glycerol + CoA. The catalysed reaction is 3-octadecanoyl-sn-glycerol + (9Z)-octadecenoyl-CoA = 1-(9Z-octadecenoyl)-3-octadecanoyl-sn-glycerol + CoA. Its pathway is glycerolipid metabolism; triacylglycerol biosynthesis. Involved in glycerolipid synthesis and lipid metabolism. Catalyzes the formation of diacylglycerol, the precursor of triacylglycerol, by transferring the acyl chain of a fatty acyl-CoA to a monoacylglycerol, mainly at the sn-1 or sn-3 positions. It uses both sn-2-monoacylglycerol (2-acylglycerol) and sn-1-monoacylglycerol (1-acyl-sn-glycerol) equally well as substrates, and uses sn-3-monoacylglycerol (3-acyl-sn-glycerol) with lower efficiency. Probably not involved in absorption of dietary fat in the small intestine. The sequence is that of 2-acylglycerol O-acyltransferase 1 from Homo sapiens (Human).